Reading from the N-terminus, the 182-residue chain is UPF0301 protein NMCC_1249 (182 aa).

This sequence belongs to the UPF0301 (AlgH) family.

This is UPF0301 protein NMCC_1249 from Neisseria meningitidis serogroup C (strain 053442).